A 168-amino-acid chain; its full sequence is Cilia- and flagella-associated protein 276 (168 aa).

Disordered stretches follow at residues 35–61 (AHLA…RDTF) and 149–168 (HTAA…FFST). Polar residues predominate over residues 38–55 (AQQQDPWSRLSSTPTATS).

In terms of assembly, microtubule inner protein component of sperm flagellar doublet microtubules. In terms of tissue distribution, predominantly expressed in nervous system tissues, such as the spinal cord, cerebrum, cerebellum, and sciatic nerve.

The protein resides in the cytoplasm. Its subcellular location is the cytoskeleton. The protein localises to the cilium axoneme. It localises to the flagellum axoneme. Its function is as follows. Microtubule inner protein (MIP) part of the dynein-decorated doublet microtubules (DMTs) in cilia axoneme, which is required for motile cilia beating. May play an important role for the maintenance of myelin-axon integrity. May affect intracellular Ca(2+) homeostasis. This is Cilia- and flagella-associated protein 276 from Mus musculus (Mouse).